The following is a 352-amino-acid chain: Homoserine O-acetyltransferase (352 aa).

The region spanning Asn-37 to Ile-330 is the AB hydrolase-1 domain. Catalysis depends on Ser-133, which acts as the Nucleophile. Arg-206 contacts substrate. Catalysis depends on residues Asp-296 and His-325. Asp-326 is a substrate binding site.

Belongs to the AB hydrolase superfamily. MetX family. Homodimer.

It localises to the cytoplasm. It carries out the reaction L-homoserine + acetyl-CoA = O-acetyl-L-homoserine + CoA. Its pathway is amino-acid biosynthesis; L-methionine biosynthesis via de novo pathway; O-acetyl-L-homoserine from L-homoserine: step 1/1. Its function is as follows. Transfers an acetyl group from acetyl-CoA to L-homoserine, forming acetyl-L-homoserine. The sequence is that of Homoserine O-acetyltransferase from Salinibacter ruber (strain DSM 13855 / M31).